The primary structure comprises 625 residues: Chaperone protein DnaK (625 aa).

Residue Thr-197 is modified to Phosphothreonine; by autocatalysis. Residues 598-625 (MYKKDDNASGEQSGGKKKDDDVIDAEVE) are disordered.

This sequence belongs to the heat shock protein 70 family.

In terms of biological role, acts as a chaperone. The polypeptide is Chaperone protein DnaK (Campylobacter curvus (strain 525.92)).